A 239-amino-acid chain; its full sequence is Claudin-14 (239 aa).

Topologically, residues 1-7 (MASTAVQ) are cytoplasmic. Residues 8-28 (LLGFLLSFLGMVGTLITTILP) form a helical membrane-spanning segment. Residues 29–81 (HWRRTAHVGTNILTAVSYLKGLWMECVWHSTGIYQCQIYRSLLALPRDLQAAR) lie on the Extracellular side of the membrane. Residues 82 to 102 (ALMVISCLLSGMACACAVVGM) traverse the membrane as a helical segment. The Cytoplasmic segment spans residues 103–115 (KCTRCAKGTPAKT). Residues 116–136 (TFAVLGGALFLLAGLLCMVAV) traverse the membrane as a helical segment. Residues 137 to 162 (SWTTNDVVQNFYNPLLPSGMKFEIGQ) are Extracellular-facing. A helical membrane pass occupies residues 163-183 (ALYLGFISSSLSLIGGTLLCL). The Cytoplasmic portion of the chain corresponds to 184–239 (SCQDEAPYRPYPPQSRAGATTTATAPAYRPPAAYKDNRAPSVTSAAHSGYRLNDYV).

This sequence belongs to the claudin family. As to expression, expressed in all sensory epithelia of the inner ear vestibular organs, as well as in liver and kidney.

It is found in the cell junction. The protein localises to the tight junction. Its subcellular location is the cell membrane. Plays a major role in tight junction-specific obliteration of the intercellular space, through calcium-independent cell-adhesion activity. The sequence is that of Claudin-14 (Cldn14) from Mus musculus (Mouse).